Consider the following 197-residue polypeptide: UPF0314 protein NGR_c32320 (197 aa).

The next 3 helical transmembrane spans lie at 16–36 (WIWLIACLGVVAIQILTQHLM), 66–86 (WYTPSHIIHGFLFYGLGYLLL), and 152–172 (LPVAVTVTIAIVLELFTGWII).

Belongs to the UPF0314 family.

It is found in the cell membrane. The chain is UPF0314 protein NGR_c32320 from Sinorhizobium fredii (strain NBRC 101917 / NGR234).